The primary structure comprises 230 residues: uncharacterized protein (230 aa).

A divalent metal cation contacts are provided by glutamate 74, glutamate 76, and aspartate 105.

The protein belongs to the FAH family.

This is an uncharacterized protein from Pyrococcus horikoshii (strain ATCC 700860 / DSM 12428 / JCM 9974 / NBRC 100139 / OT-3).